Reading from the N-terminus, the 32-residue chain is Hainantoxin F8-35.23 (32 aa).

Expressed by the venom gland.

Its subcellular location is the secreted. The sequence is that of Hainantoxin F8-35.23 from Cyriopagopus hainanus (Chinese bird spider).